The primary structure comprises 580 residues: Malto-oligosyltrehalose trehalohydrolase (580 aa).

Positions 56–88 are disordered; sequence LPDPRSARQPDGVHARSQRWEPPGQFGAARTDT. Residues 60 to 69 show a composition bias toward basic and acidic residues; sequence RSARQPDGVH. 245–250 is a substrate binding site; it reads RLDAVH. Residue Asp247 is the Nucleophile of the active site. The Proton donor role is filled by Glu284. Residues 309 to 313 and 379 to 384 contribute to the substrate site; these read DDIHH and HDQVGN.

Belongs to the glycosyl hydrolase 13 family.

The protein resides in the cytoplasm. The enzyme catalyses hydrolysis of (1-&gt;4)-alpha-D-glucosidic linkage in 4-alpha-D-[(1-&gt;4)-alpha-D-glucanosyl]n trehalose to yield trehalose and (1-&gt;4)-alpha-D-glucan.. Its pathway is glycan biosynthesis; trehalose biosynthesis. Its function is as follows. Is involved in the biosynthesis of trehalose but not in that of capsular glucan and glycogen. The polypeptide is Malto-oligosyltrehalose trehalohydrolase (treZ) (Mycobacterium tuberculosis (strain CDC 1551 / Oshkosh)).